The sequence spans 319 residues: Cobalamin biosynthesis protein CobD (319 aa).

5 consecutive transmembrane segments (helical) span residues 56-76 (VMWL…LALA), 78-98 (GIHP…ALAG), 153-173 (VDGI…LAMA), 204-224 (VANF…AVLC), and 296-316 (LMWV…YWLV).

The protein belongs to the CobD/CbiB family.

The protein localises to the cell membrane. It functions in the pathway cofactor biosynthesis; adenosylcobalamin biosynthesis. Converts cobyric acid to cobinamide by the addition of aminopropanol on the F carboxylic group. The chain is Cobalamin biosynthesis protein CobD from Klebsiella pneumoniae subsp. pneumoniae (strain ATCC 700721 / MGH 78578).